Here is a 764-residue protein sequence, read N- to C-terminus: MVYNEKNGGGIPPVPLSLNTATPWQNVNLHNDQQTEPQLKSHPDTDPRITPYLGLRARLSQLWFNRWTILLILVLIRVIILTANLKENLGDAKAKALSACTKVEDVGSAMASMPYYMSKGVNVMAAGSMQKAVEAMASVLKMILTGVQAIIMFVINMYIGTFACLVAAFIHGGLHVATAVVEGATKVMNDAISSITKGITDDMKSFQSAIDKARDFINSGIGLISKDIQLPTINIDSHIRDLQGIKINANGVVNGLDVLDQKIPTFDEAKNLTESALAIPFNLVKGKIDTAFSEFTIEPTIFPTAEKQALSFCSNNSFLNDFFESLITLVYKAKIAFLVVIIILALLAIFVMGYIEYRGFKRERERAARMDANAFNSQDAIYIASRRWTADGGMRLAKWWTKDTDSKNYLLIRWAFAYATSLPALFVLSLAVAGMLSCLFQWVLLRQIEKKAPELAAQVGDFAGDVVGTLKQVSNNWANSSNAVVANMESDINSDLFGWVREATESVNNTLTVLDDQIDHALVAVFNGTVLLDTARDVVGCLIGRKIDAVQDGLTWVHDHAKVTLPRFDDDIFSAGAAQSMGSDGDLSSFLAKPGAVTTDEINEAVGKVIRSLRNGVIQEALITLGLFLTYVIVVLIGVMGALIGWATPGKTRGEGGQQFGGRPPSFHNHNGFDPALAPSNAMVGNPASPHYQNEKFGGGGGMHDVASPAYEEVVYAGRVPVGNTRELITRYPSHQRTSSYPTVESPDPMPHGDEKVPGYFTPI.

Residues 1-61 (MVYNEKNGGG…YLGLRARLSQ (61 aa)) lie on the Extracellular side of the membrane. A helical membrane pass occupies residues 62 to 82 (LWFNRWTILLILVLIRVIILT). Residues 83–149 (ANLKENLGDA…LKMILTGVQA (67 aa)) are Cytoplasmic-facing. The helical transmembrane segment at 150 to 170 (IIMFVINMYIGTFACLVAAFI) threads the bilayer. The Extracellular segment spans residues 171 to 334 (HGGLHVATAV…SLITLVYKAK (164 aa)). 2 N-linked (GlcNAc...) asparagine glycosylation sites follow: Asn271 and Asn315. Residues 335 to 355 (IAFLVVIIILALLAIFVMGYI) traverse the membrane as a helical segment. Residues 356–424 (EYRGFKRERE…AFAYATSLPA (69 aa)) lie on the Cytoplasmic side of the membrane. The chain crosses the membrane as a helical span at residues 425–445 (LFVLSLAVAGMLSCLFQWVLL). Residues 446 to 624 (RQIEKKAPEL…NGVIQEALIT (179 aa)) are Extracellular-facing. Asn479, Asn508, and Asn527 each carry an N-linked (GlcNAc...) asparagine glycan. The helical transmembrane segment at 625–645 (LGLFLTYVIVVLIGVMGALIG) threads the bilayer. Residues 646–764 (WATPGKTRGE…EKVPGYFTPI (119 aa)) are Cytoplasmic-facing. Disordered stretches follow at residues 653–701 (RGEG…GGGG) and 735–754 (HQRT…PHGD).

Belongs to the PRM1 family.

The protein resides in the cell membrane. In terms of biological role, involved in cell fusion during mating by stabilizing the plasma membrane fusion event. This Neurospora crassa (strain ATCC 24698 / 74-OR23-1A / CBS 708.71 / DSM 1257 / FGSC 987) protein is Plasma membrane fusion protein prm-1 (prm-1).